A 389-amino-acid polypeptide reads, in one-letter code: Mannitol-1-phosphate 5-dehydrogenase (389 aa).

7-18 is an NAD(+) binding site; that stretch reads AVHFGGGNIGRG. Lys-216 is a catalytic residue.

The protein belongs to the mannitol dehydrogenase family. Monomer.

It catalyses the reaction D-mannitol 1-phosphate + NAD(+) = beta-D-fructose 6-phosphate + NADH + H(+). Functionally, catalyzes the NAD(H)-dependent interconversion of D-fructose 6-phosphate and D-mannitol 1-phosphate in the mannitol metabolic pathway. This chain is Mannitol-1-phosphate 5-dehydrogenase, found in Pyrenophora tritici-repentis (strain Pt-1C-BFP) (Wheat tan spot fungus).